A 324-amino-acid chain; its full sequence is Dioxygenase tasH (324 aa).

The N-terminal stretch at 1 to 25 (MRSMSLWMLIGPVTGIATWASLRYA) is a signal peptide. Zn(2+) contacts are provided by H50, H96, and H284.

The protein belongs to the DODA-type extradiol aromatic ring-opening dioxygenase family. In terms of assembly, monomer. Zn(2+) is required as a cofactor.

In terms of biological role, dioxygenase; part of the gene cluster that mediates the biosynthesis of the tetramic acids Sch210971 and Sch210972, potential anti-HIV fungal natural product that contain a decalin core. The PKS module of tasS together with the enoylreductase tasC catalyze the formation of the polyketide unit which is then conjugated to 4-hydroxyl-4-methyl glutamate (HMG) by the condensation domain of the tasS NRPS module. One unique structural feature of Sch210971 and Sch210972 is the tetramic acid motif proposed to be derived from the non-proteinogenic amino acid HMG, by a Dieckmann-type condensation catalyzed by the reductase domain of tasS. The aldolase tasA catalyzes the aldol condensation of 2 molecules of pyruvic acid to yield the intermediate 4-hydroxyl-4-methyl-2-oxoglutarate (HMOG), which can then be stereoselectively transaminated, may be by tasG, to form HMG. The Diels-Alderase tas3 then uses the Dieckmann product of tasS as substrate and catalyzes the Diels-Alder cycloaddition to form the decalin ring of Sch210971 and Sch210972. This Hapsidospora irregularis protein is Dioxygenase tasH.